Consider the following 356-residue polypeptide: DNA polymerase IV (356 aa).

The UmuC domain maps to 6-187 (IIHIDMDYFF…LDIGDFPGVG (182 aa)). Residues aspartate 10 and aspartate 105 each contribute to the Mg(2+) site. Glutamate 106 is a catalytic residue.

It belongs to the DNA polymerase type-Y family. As to quaternary structure, monomer. Mg(2+) serves as cofactor.

It is found in the cytoplasm. The enzyme catalyses DNA(n) + a 2'-deoxyribonucleoside 5'-triphosphate = DNA(n+1) + diphosphate. Functionally, poorly processive, error-prone DNA polymerase involved in untargeted mutagenesis. Copies undamaged DNA at stalled replication forks, which arise in vivo from mismatched or misaligned primer ends. These misaligned primers can be extended by PolIV. Exhibits no 3'-5' exonuclease (proofreading) activity. May be involved in translesional synthesis, in conjunction with the beta clamp from PolIII. This chain is DNA polymerase IV, found in Staphylococcus aureus (strain COL).